Reading from the N-terminus, the 381-residue chain is MDSFLPFSRPAIGDEEIQAVEKVLRSGWITTGPQNHQLEQDFCRMFGCKHAVALASATAGMHLTLMALGIGPGDEVITPSQTWVSTINMICLLGAEPIMIDVDRHTLMVDAQTVKKAITSRTKAIIPVHYAGAPCDLDILRGIAQEAGIPLIEDAAHALGTRYKNEWIGEHGTAIFSFHAIKNATCAEGGLIATDNNELVERIRCLKFHGLGIDAFDRQIQGRRPQAEVVEPGYKYNLSDIHAAIAVVQLSKLESMNIRRRQIVARYSTALKDSPLQMLSVPDYEHIHAHHLFMVRVNKDVCGIDRDTLMERLKNKNIGTGLHFRAAHTQKYYRDRYPQLSLPESEWNSVTLCSLPLFPDMSDDDVDRVTDALQEIISEHR.

The residue at position 182 (lysine 182) is an N6-(pyridoxal phosphate)lysine.

The protein belongs to the DegT/DnrJ/EryC1 family. ArnB subfamily. In terms of assembly, homodimer. Requires pyridoxal 5'-phosphate as cofactor.

The catalysed reaction is UDP-4-amino-4-deoxy-beta-L-arabinose + 2-oxoglutarate = UDP-beta-L-threo-pentopyranos-4-ulose + L-glutamate. Its pathway is nucleotide-sugar biosynthesis; UDP-4-deoxy-4-formamido-beta-L-arabinose biosynthesis; UDP-4-deoxy-4-formamido-beta-L-arabinose from UDP-alpha-D-glucuronate: step 2/3. The protein operates within bacterial outer membrane biogenesis; lipopolysaccharide biosynthesis. In terms of biological role, catalyzes the conversion of UDP-4-keto-arabinose (UDP-Ara4O) to UDP-4-amino-4-deoxy-L-arabinose (UDP-L-Ara4N). The modified arabinose is attached to lipid A and is required for resistance to polymyxin and cationic antimicrobial peptides. The polypeptide is UDP-4-amino-4-deoxy-L-arabinose--oxoglutarate aminotransferase (Photorhabdus laumondii subsp. laumondii (strain DSM 15139 / CIP 105565 / TT01) (Photorhabdus luminescens subsp. laumondii)).